A 242-amino-acid polypeptide reads, in one-letter code: Uridylate kinase (242 aa).

ATP is bound at residue 16–19 (KISG). Residues 24–29 (GDQGFG) are involved in allosteric activation by GTP. Glycine 58 is a binding site for UMP. ATP is bound by residues glycine 59 and arginine 63. UMP-binding positions include aspartate 78 and 139-146 (TGNPYFTT). ATP-binding residues include threonine 166, tyrosine 172, and aspartate 175.

It belongs to the UMP kinase family. In terms of assembly, homohexamer.

It is found in the cytoplasm. It catalyses the reaction UMP + ATP = UDP + ADP. Its pathway is pyrimidine metabolism; CTP biosynthesis via de novo pathway; UDP from UMP (UMPK route): step 1/1. Its activity is regulated as follows. Allosterically activated by GTP. Inhibited by UTP. Catalyzes the reversible phosphorylation of UMP to UDP. This is Uridylate kinase from Roseobacter denitrificans (strain ATCC 33942 / OCh 114) (Erythrobacter sp. (strain OCh 114)).